We begin with the raw amino-acid sequence, 43 residues long: Protein PsbN (43 aa).

A helical transmembrane segment spans residues 5–27 (NLVAIFVSCLLVSLTGYALYTSF).

Belongs to the PsbN family.

The protein localises to the plastid. It localises to the chloroplast thylakoid membrane. Its function is as follows. May play a role in photosystem I and II biogenesis. This is Protein PsbN from Ephedra sinica (Chinese ephedra).